Reading from the N-terminus, the 160-residue chain is Allophycocyanin alpha chain (160 aa).

The residue at position 70 (N70) is an N4-methylasparagine. C80 is a binding site for (2R,3E)-phycocyanobilin.

Belongs to the phycobiliprotein family. As to quaternary structure, component of the phycobilisome. Heterodimer of an alpha and a beta chain. Post-translationally, contains one covalently linked phycocyanobilin chromophore.

It localises to the cellular thylakoid membrane. Its function is as follows. Light-harvesting photosynthetic bile pigment-protein from the phycobiliprotein complex. Allophycocyanin has a maximum absorption at approximately 650 nanometers. The protein is Allophycocyanin alpha chain (apcA) of Mastigocladus laminosus (Fischerella sp.).